A 1266-amino-acid polypeptide reads, in one-letter code: 5-oxoprolinase 1 (1266 aa).

The protein belongs to the oxoprolinase family. Expressed in roots, stems, leaves, flowers and siliques.

It localises to the cytoplasm. It carries out the reaction 5-oxo-L-proline + ATP + 2 H2O = L-glutamate + ADP + phosphate + H(+). Its function is as follows. Catalyzes the cleavage of 5-oxo-L-proline to form L-glutamate coupled to the hydrolysis of ATP to ADP and inorganic phosphate. Acts in the glutathione degradation pathway. In Arabidopsis thaliana (Mouse-ear cress), this protein is 5-oxoprolinase 1.